The chain runs to 297 residues: MEINGVEIEDTFAEAFGIKVSRVLVTAATKKLAKIAATEATGYGTSVIGCPAEAGIDCYVPPEETPDGRPGYIIMICNPSKKSLDHELLERIGMGILTAPTTAVFDALDDEDEKLNIGFKLKFFGDGYEKELEIDGRKIHSIPIMSGDFLIESEFGIKDGVAGGNFFIMGDSQASALLAAQAAVDAIAAVEGTVTPFPGGVVASGSKVGSNKYKFLNASTNEKMCVTLKDEVEDTQIPENVNGVYEIVIDGVDEEAVREAMKEGIKAACTVPGIIKISAGNYGGNLGAYKIKLHDLF.

This sequence belongs to the FTR family. Homotetramer.

It localises to the cytoplasm. The enzyme catalyses N-formylmethanofuran + 5,6,7,8-tetrahydromethanopterin + H(+) = N(5)-formyl-5,6,7,8-tetrahydromethanopterin + methanofuran. The protein operates within one-carbon metabolism; methanogenesis from CO(2); 5,10-methenyl-5,6,7,8-tetrahydromethanopterin from CO(2): step 2/3. Catalyzes the reversible transfer of a formyl group from formylmethanofuran (formyl-MFR) to tetrahydromethanopterin (H(4)MPT) to produce 5-formyl tetrahydromethanopterin (5-formyl-H(4)MPT) and methanofuran (MFR). The sequence is that of Formylmethanofuran--tetrahydromethanopterin formyltransferase from Methanothermobacter thermautotrophicus (strain ATCC 29096 / DSM 1053 / JCM 10044 / NBRC 100330 / Delta H) (Methanobacterium thermoautotrophicum).